A 254-amino-acid chain; its full sequence is Probable phosphatase TTE1963 (254 aa).

Zn(2+) contacts are provided by H14, H16, H22, H47, E80, H108, H139, D200, and H202.

It belongs to the PHP family. The cofactor is Zn(2+).

This is Probable phosphatase TTE1963 from Caldanaerobacter subterraneus subsp. tengcongensis (strain DSM 15242 / JCM 11007 / NBRC 100824 / MB4) (Thermoanaerobacter tengcongensis).